A 969-amino-acid polypeptide reads, in one-letter code: RNA polymerase-associated protein RapA (969 aa).

The Helicase ATP-binding domain occupies 164 to 334 (EVGRRHAPRV…FARLRLLDSD (171 aa)). 177–184 (DEVGLGKT) is a binding site for ATP. A DEAH box motif is present at residues 280-283 (DEAH). The Helicase C-terminal domain occupies 492–668 (RVNWLLEKLK…GSNEALDDVI (177 aa)).

It belongs to the SNF2/RAD54 helicase family. RapA subfamily. In terms of assembly, interacts with the RNAP. Has a higher affinity for the core RNAP than for the holoenzyme. Its ATPase activity is stimulated by binding to RNAP.

In terms of biological role, transcription regulator that activates transcription by stimulating RNA polymerase (RNAP) recycling in case of stress conditions such as supercoiled DNA or high salt concentrations. Probably acts by releasing the RNAP, when it is trapped or immobilized on tightly supercoiled DNA. Does not activate transcription on linear DNA. Probably not involved in DNA repair. In Vibrio vulnificus (strain CMCP6), this protein is RNA polymerase-associated protein RapA.